Reading from the N-terminus, the 404-residue chain is Nicotinate phosphoribosyltransferase (404 aa).

Position 225 is a phosphohistidine; by autocatalysis (His-225).

This sequence belongs to the NAPRTase family. Transiently phosphorylated on a His residue during the reaction cycle. Phosphorylation strongly increases the affinity for substrates and increases the rate of nicotinate D-ribonucleotide production. Dephosphorylation regenerates the low-affinity form of the enzyme, leading to product release.

It carries out the reaction nicotinate + 5-phospho-alpha-D-ribose 1-diphosphate + ATP + H2O = nicotinate beta-D-ribonucleotide + ADP + phosphate + diphosphate. It participates in cofactor biosynthesis; NAD(+) biosynthesis; nicotinate D-ribonucleotide from nicotinate: step 1/1. Catalyzes the synthesis of beta-nicotinate D-ribonucleotide from nicotinate and 5-phospho-D-ribose 1-phosphate at the expense of ATP. The chain is Nicotinate phosphoribosyltransferase from Acinetobacter baumannii (strain ATCC 17978 / DSM 105126 / CIP 53.77 / LMG 1025 / NCDC KC755 / 5377).